Here is a 103-residue protein sequence, read N- to C-terminus: Large ribosomal subunit protein eL30 (103 aa).

Belongs to the eukaryotic ribosomal protein eL30 family.

In Methanothrix thermoacetophila (strain DSM 6194 / JCM 14653 / NBRC 101360 / PT) (Methanosaeta thermophila), this protein is Large ribosomal subunit protein eL30.